The primary structure comprises 384 residues: Ribosomal RNA large subunit methyltransferase G (384 aa).

The protein belongs to the methyltransferase superfamily. RlmG family.

It is found in the cytoplasm. It catalyses the reaction guanosine(1835) in 23S rRNA + S-adenosyl-L-methionine = N(2)-methylguanosine(1835) in 23S rRNA + S-adenosyl-L-homocysteine + H(+). Functionally, specifically methylates the guanine in position 1835 (m2G1835) of 23S rRNA. The polypeptide is Ribosomal RNA large subunit methyltransferase G (Pseudoalteromonas atlantica (strain T6c / ATCC BAA-1087)).